The chain runs to 166 residues: NADPH-dependent 7-cyano-7-deazaguanine reductase (166 aa).

Cysteine 57 serves as the catalytic Thioimide intermediate. Aspartate 64 acts as the Proton donor in catalysis. Substrate is bound by residues 79 to 81 and 98 to 99; these read VES and HE.

It belongs to the GTP cyclohydrolase I family. QueF type 1 subfamily.

It is found in the cytoplasm. The enzyme catalyses 7-aminomethyl-7-carbaguanine + 2 NADP(+) = 7-cyano-7-deazaguanine + 2 NADPH + 3 H(+). It functions in the pathway tRNA modification; tRNA-queuosine biosynthesis. Functionally, catalyzes the NADPH-dependent reduction of 7-cyano-7-deazaguanine (preQ0) to 7-aminomethyl-7-deazaguanine (preQ1). The protein is NADPH-dependent 7-cyano-7-deazaguanine reductase of Staphylococcus haemolyticus (strain JCSC1435).